The following is a 177-amino-acid chain: Peptidyl-tRNA hydrolase (177 aa).

Tyr-14 contributes to the tRNA binding site. The Proton acceptor role is filled by His-19. TRNA-binding residues include Phe-64, Asn-66, and Asn-112.

This sequence belongs to the PTH family. Monomer.

It localises to the cytoplasm. The catalysed reaction is an N-acyl-L-alpha-aminoacyl-tRNA + H2O = an N-acyl-L-amino acid + a tRNA + H(+). In terms of biological role, hydrolyzes ribosome-free peptidyl-tRNAs (with 1 or more amino acids incorporated), which drop off the ribosome during protein synthesis, or as a result of ribosome stalling. Catalyzes the release of premature peptidyl moieties from peptidyl-tRNA molecules trapped in stalled 50S ribosomal subunits, and thus maintains levels of free tRNAs and 50S ribosomes. The protein is Peptidyl-tRNA hydrolase of Latilactobacillus sakei (Lactobacillus sakei).